A 234-amino-acid polypeptide reads, in one-letter code: Sugar fermentation stimulation protein A (234 aa).

A DNA-binding region (H-T-H motif) is located at residues 201–220 (LLTEAQQRGVEILAYKAEIS).

This sequence belongs to the SfsA family.

In terms of biological role, binds to DNA non-specifically. Could be a regulatory factor involved in maltose metabolism. This chain is Sugar fermentation stimulation protein A, found in Escherichia fergusonii (strain ATCC 35469 / DSM 13698 / CCUG 18766 / IAM 14443 / JCM 21226 / LMG 7866 / NBRC 102419 / NCTC 12128 / CDC 0568-73).